The primary structure comprises 308 residues: Lipoyl synthase 2 (308 aa).

C49, C54, C60, C75, C79, C82, and S300 together coordinate [4Fe-4S] cluster. In terms of domain architecture, Radical SAM core spans Y61–K289.

Belongs to the radical SAM superfamily. Lipoyl synthase family. [4Fe-4S] cluster serves as cofactor.

Its subcellular location is the cytoplasm. The catalysed reaction is [[Fe-S] cluster scaffold protein carrying a second [4Fe-4S](2+) cluster] + N(6)-octanoyl-L-lysyl-[protein] + 2 oxidized [2Fe-2S]-[ferredoxin] + 2 S-adenosyl-L-methionine + 4 H(+) = [[Fe-S] cluster scaffold protein] + N(6)-[(R)-dihydrolipoyl]-L-lysyl-[protein] + 4 Fe(3+) + 2 hydrogen sulfide + 2 5'-deoxyadenosine + 2 L-methionine + 2 reduced [2Fe-2S]-[ferredoxin]. Its pathway is protein modification; protein lipoylation via endogenous pathway; protein N(6)-(lipoyl)lysine from octanoyl-[acyl-carrier-protein]: step 2/2. In terms of biological role, catalyzes the radical-mediated insertion of two sulfur atoms into the C-6 and C-8 positions of the octanoyl moiety bound to the lipoyl domains of lipoate-dependent enzymes, thereby converting the octanoylated domains into lipoylated derivatives. This Prochlorococcus marinus (strain SARG / CCMP1375 / SS120) protein is Lipoyl synthase 2.